A 118-amino-acid polypeptide reads, in one-letter code: Co-chaperonin GroES (118 aa).

The protein belongs to the GroES chaperonin family. In terms of assembly, heptamer of 7 subunits arranged in a ring. Interacts with the chaperonin GroEL.

The protein localises to the cytoplasm. Functionally, together with the chaperonin GroEL, plays an essential role in assisting protein folding. The GroEL-GroES system forms a nano-cage that allows encapsulation of the non-native substrate proteins and provides a physical environment optimized to promote and accelerate protein folding. GroES binds to the apical surface of the GroEL ring, thereby capping the opening of the GroEL channel. The polypeptide is Co-chaperonin GroES (Helicobacter pylori (strain P12)).